Consider the following 43-residue polypeptide: Protein PsbN (43 aa).

The chain crosses the membrane as a helical span at residues isoleucine 7–phenylalanine 27.

It belongs to the PsbN family.

Its subcellular location is the plastid. It localises to the chloroplast thylakoid membrane. Functionally, may play a role in photosystem I and II biogenesis. This is Protein PsbN from Suaeda maritima (Annual sea blite).